We begin with the raw amino-acid sequence, 431 residues long: Enolase (431 aa).

Q163 is a binding site for (2R)-2-phosphoglycerate. The Proton donor role is filled by E205. Residues D242, E288, and D315 each contribute to the Mg(2+) site. Positions 340, 369, 370, and 391 each coordinate (2R)-2-phosphoglycerate. K340 acts as the Proton acceptor in catalysis.

Belongs to the enolase family. Requires Mg(2+) as cofactor.

It localises to the cytoplasm. Its subcellular location is the secreted. The protein localises to the cell surface. The catalysed reaction is (2R)-2-phosphoglycerate = phosphoenolpyruvate + H2O. The protein operates within carbohydrate degradation; glycolysis; pyruvate from D-glyceraldehyde 3-phosphate: step 4/5. Functionally, catalyzes the reversible conversion of 2-phosphoglycerate (2-PG) into phosphoenolpyruvate (PEP). It is essential for the degradation of carbohydrates via glycolysis. The polypeptide is Enolase (Bacillus cereus (strain B4264)).